Reading from the N-terminus, the 177-residue chain is Macro domain-containing protein in non 5'region (177 aa).

The 177-residue stretch at 1–177 folds into the Macro domain; that stretch reads MSTSVSPVVR…VEFEEVLAMR (177 aa).

Belongs to the MacroD-type family.

The sequence is that of Macro domain-containing protein in non 5'region from Streptomyces griseus.